The following is a 299-amino-acid chain: Probable lipid kinase YegS (299 aa).

A DAGKc domain is found at 2 to 133 (ANFPASLLIL…IDMARVNDKT (132 aa)). ATP contacts are provided by residues Thr-40, 66–72 (GDGTINE), and Thr-95. Mg(2+)-binding residues include Leu-215, Asp-218, and Leu-220. Glu-271 (proton acceptor) is an active-site residue.

The protein belongs to the diacylglycerol/lipid kinase family. YegS lipid kinase subfamily. Requires Mg(2+) as cofactor. It depends on Ca(2+) as a cofactor.

Its subcellular location is the cytoplasm. Its function is as follows. Probably phosphorylates lipids; the in vivo substrate is unknown. This is Probable lipid kinase YegS from Salmonella paratyphi A (strain ATCC 9150 / SARB42).